The sequence spans 200 residues: Cuticle protein 19.8 (200 aa).

3 consecutive repeat copies span residues 20-23, 26-29, and 43-46. The region spanning 56-127 is the Chitin-binding type R&amp;R domain; sequence HPQYSYGYSV…EPGVHAPIAA (72 aa). The interval 70–89 is disordered; the sequence is TGDSKSQQESRDGDVVQGSY. Tandem repeats lie at residues 126–129, 144–147, 150–153, 159–162, and 177–180.

In terms of biological role, component of the cuticle of migratory locust which contains more than 100 different structural proteins. This Locusta migratoria (Migratory locust) protein is Cuticle protein 19.8.